Consider the following 348-residue polypeptide: MSLFVASRSAFRAAAPLKRQFQIRRYATEPPSADAKKGNNTLLYGAAAAAVAGAGYYFLGGTPAAKKAEEKVKDASSAAAGKLSTSEVKQALTGGEQGWVSLKLEEVEIVNHNSKRLRFRLPEDDMVSGVHVASAILTKFKPVDAEKPVIRPYTPTNDEDARGYLDLLVKKYPNGPMSTHLHDMVPGQRLDVKGPLPKYPWTANKHGHIALVAGGTGITPMFQLCRAIFNNPDDQTKVTLVFGNVREDDILLKKELAALENNNPRRFRAFYVLDDPPKHWTGGKGFITKDLLKTVLPEPKDENIKVFVCGPPGMMDAISGNKKSPKDQGELKGILKELGYSPEQVYKF.

A helical transmembrane segment spans residues 41 to 61 (TLLYGAAAAAVAGAGYYFLGG). Residues 97 to 202 (QGWVSLKLEE…KGPLPKYPWT (106 aa)) enclose the FAD-binding FR-type domain. 205 to 240 (KHGHIALVAGGTGITPMFQLCRAIFNNPDDQTKVTL) is a binding site for FAD.

It belongs to the flavoprotein pyridine nucleotide cytochrome reductase family. FAD is required as a cofactor.

The protein resides in the mitochondrion outer membrane. It carries out the reaction 2 Fe(III)-[cytochrome b5] + NADH = 2 Fe(II)-[cytochrome b5] + NAD(+) + H(+). In terms of biological role, may mediate the reduction of outer membrane cytochrome b5. The protein is NADH-cytochrome b5 reductase 2 (MCR1) of Chaetomium globosum (strain ATCC 6205 / CBS 148.51 / DSM 1962 / NBRC 6347 / NRRL 1970) (Soil fungus).